A 91-amino-acid chain; its full sequence is MGRSLKKGPFIADSLLRKLEKQNADDDKSVIKTWSRASTILPMMIGHTIAVHNGRSHVPVFITEQMVGHKLGEFAPTRTFKGHIKDKKGGR.

This sequence belongs to the universal ribosomal protein uS19 family.

Its function is as follows. Protein S19 forms a complex with S13 that binds strongly to the 16S ribosomal RNA. This chain is Small ribosomal subunit protein uS19, found in Prochlorococcus marinus (strain MIT 9303).